Here is a 223-residue protein sequence, read N- to C-terminus: N-(5'-phosphoribosyl)anthranilate isomerase (223 aa).

This sequence belongs to the TrpF family.

It catalyses the reaction N-(5-phospho-beta-D-ribosyl)anthranilate = 1-(2-carboxyphenylamino)-1-deoxy-D-ribulose 5-phosphate. Its pathway is amino-acid biosynthesis; L-tryptophan biosynthesis; L-tryptophan from chorismate: step 3/5. This Moorella thermoacetica (strain ATCC 39073 / JCM 9320) protein is N-(5'-phosphoribosyl)anthranilate isomerase.